The primary structure comprises 252 residues: Adenosylcobinamide-GDP ribazoletransferase (252 aa).

7 helical membrane passes run 4 to 24, 38 to 58, 60 to 80, 113 to 133, 141 to 161, 190 to 210, and 232 to 252; these read LFKGLMMSLSMFTIIPMPYVE, PIIGLIVGCVWFLGYKLINYL, ISIVLKSALIMIIPFIITGML, FSVISVIILFFIQFGAVHSFL, ILMFLPIISRNIVAYFFITII, LVCILFGSILGYIGIAILLIV, and VAGFSLVVGEIVGLFSACLFT.

This sequence belongs to the CobS family. Mg(2+) is required as a cofactor.

Its subcellular location is the cell membrane. It carries out the reaction alpha-ribazole + adenosylcob(III)inamide-GDP = adenosylcob(III)alamin + GMP + H(+). The catalysed reaction is alpha-ribazole 5'-phosphate + adenosylcob(III)inamide-GDP = adenosylcob(III)alamin 5'-phosphate + GMP + H(+). The protein operates within cofactor biosynthesis; adenosylcobalamin biosynthesis; adenosylcobalamin from cob(II)yrinate a,c-diamide: step 7/7. Its function is as follows. Joins adenosylcobinamide-GDP and alpha-ribazole to generate adenosylcobalamin (Ado-cobalamin). Also synthesizes adenosylcobalamin 5'-phosphate from adenosylcobinamide-GDP and alpha-ribazole 5'-phosphate. This is Adenosylcobinamide-GDP ribazoletransferase from Clostridium botulinum (strain Alaska E43 / Type E3).